The primary structure comprises 151 residues: UPF0208 membrane protein YPTB2595 (151 aa).

The next 2 membrane-spanning stretches (helical) occupy residues 46 to 66 (FGIRFMPPLAIFTLTWQIALG) and 69 to 89 (LGPAIATALFACGLPLQGLWW).

It belongs to the UPF0208 family.

The protein localises to the cell inner membrane. In Yersinia pseudotuberculosis serotype I (strain IP32953), this protein is UPF0208 membrane protein YPTB2595.